Here is a 564-residue protein sequence, read N- to C-terminus: Septation ring formation regulator EzrA (564 aa).

The Extracellular portion of the chain corresponds to 1–4; it reads MVLY. A helical membrane pass occupies residues 5-23; the sequence is IILAIIVIILIAVGVLFYL. Topologically, residues 24–564 are cytoplasmic; sequence RSNKRQIIEK…KHIEEEVIKQ (541 aa). Coiled-coil stretches lie at residues 99 to 138, 190 to 223, 271 to 300, 350 to 435, and 471 to 550; these read SFNASQSEIDDANELMDSYEQSYQQQLEDVNEIIALYKDN, DGNYVQAHNHIAALNEQMKQLRSYMEEIPELIRE, LISRLELEEANDKLANINDKLDDMYDLIEH, VRQF…RRLL, and VKQL…ESVE.

The protein belongs to the EzrA family.

The protein localises to the cell membrane. In terms of biological role, negative regulator of FtsZ ring formation; modulates the frequency and position of FtsZ ring formation. Inhibits FtsZ ring formation at polar sites. Interacts either with FtsZ or with one of its binding partners to promote depolymerization. The chain is Septation ring formation regulator EzrA from Staphylococcus aureus (strain Mu3 / ATCC 700698).